A 468-amino-acid polypeptide reads, in one-letter code: MSLNGFYLLPHPPIVVPEVGRGEEKKIENTTKSFEAIAKDIAGKAPNTIIIVTPHGTMFQDYIALAYEDEISGSFKDFRAPNVSMELKINKELTSKIYELAYGERIPSVMATNDILKKYNTSVFLDHGCMVPLYFINKYYKEYKIVHITYAALSDIELYRFGMNVTKAVEELNENAVFIASGDLSHRLREDGPYGYNPAGEKFDKELLNNLKDGNVEGVFSIDKDTVYNAGECGRRSVAVLLGTLEGKKFKGEILSYEGTFGVGYGVMKLEAFSNDTSKLKELERIRKDEYESKKQEKDPYVKLARESLTQYLTTGEAIEEIPDYVTEEMRDLKRGVFVSLKKFGDLRGCIGTIFPVTDNIAEEIIRNAIEAGLNDPRFYEVGKDELVDIDFSVDVLDEPESATREELDPKKYGVIVTHGRKKGLLLPNLEGVNTVEEQLEIALEKADIDSHEDYTIEKFMVTRHKES.

A unknown region spans residues 1–289 (MSLNGFYLLP…LKELERIRKD (289 aa)). Positions 296–468 (QEKDPYVKLA…KFMVTRHKES (173 aa)) constitute an AMMECR1 domain.

The sequence is that of Protein CA_C1420 from Clostridium acetobutylicum (strain ATCC 824 / DSM 792 / JCM 1419 / IAM 19013 / LMG 5710 / NBRC 13948 / NRRL B-527 / VKM B-1787 / 2291 / W).